The chain runs to 548 residues: Fumarate hydratase class I, aerobic (548 aa).

[4Fe-4S] cluster-binding residues include cysteine 105, cysteine 224, and cysteine 318.

It belongs to the class-I fumarase family. As to quaternary structure, homodimer. It depends on [4Fe-4S] cluster as a cofactor.

It catalyses the reaction (S)-malate = fumarate + H2O. It carries out the reaction oxaloacetate = enol-oxaloacetate. It participates in carbohydrate metabolism; tricarboxylic acid cycle; (S)-malate from fumarate: step 1/1. Its function is as follows. Catalyzes the reversible hydration of fumarate to (S)-malate. Functions as an aerobic enzyme in the direction of malate formation as part of the citric acid cycle. Accounts for about 80% of the fumarase activity when the bacteria grow aerobically. To a lesser extent, also displays D-tartrate dehydratase activity in vitro, but is not able to convert (R)-malate, L-tartrate or meso-tartrate. Can also catalyze the isomerization of enol- to keto-oxaloacetate. This is Fumarate hydratase class I, aerobic from Escherichia coli O6:H1 (strain CFT073 / ATCC 700928 / UPEC).